The following is a 176-amino-acid chain: Large ribosomal subunit protein uL10 (176 aa).

Belongs to the universal ribosomal protein uL10 family. In terms of assembly, part of the ribosomal stalk of the 50S ribosomal subunit. The N-terminus interacts with L11 and the large rRNA to form the base of the stalk. The C-terminus forms an elongated spine to which L12 dimers bind in a sequential fashion forming a multimeric L10(L12)X complex.

Its function is as follows. Forms part of the ribosomal stalk, playing a central role in the interaction of the ribosome with GTP-bound translation factors. This is Large ribosomal subunit protein uL10 from Acaryochloris marina (strain MBIC 11017).